Here is a 250-residue protein sequence, read N- to C-terminus: 3-deoxy-manno-octulosonate cytidylyltransferase (250 aa).

The protein belongs to the KdsB family.

Its subcellular location is the cytoplasm. It catalyses the reaction 3-deoxy-alpha-D-manno-oct-2-ulosonate + CTP = CMP-3-deoxy-beta-D-manno-octulosonate + diphosphate. It functions in the pathway nucleotide-sugar biosynthesis; CMP-3-deoxy-D-manno-octulosonate biosynthesis; CMP-3-deoxy-D-manno-octulosonate from 3-deoxy-D-manno-octulosonate and CTP: step 1/1. It participates in bacterial outer membrane biogenesis; lipopolysaccharide biosynthesis. In terms of biological role, activates KDO (a required 8-carbon sugar) for incorporation into bacterial lipopolysaccharide in Gram-negative bacteria. The protein is 3-deoxy-manno-octulosonate cytidylyltransferase of Janthinobacterium sp. (strain Marseille) (Minibacterium massiliensis).